The following is a 186-amino-acid chain: Cytochrome c oxidase subunit 4, mitochondrial (186 aa).

The transit peptide at 1 to 31 (MLLSRTAVAVARRATAAPALRRSIATTVVRC) directs the protein to the mitochondrion. Zn(2+) is bound by residues C118, H126, C142, and C145.

The protein belongs to the cytochrome c oxidase subunit 5B family. In terms of assembly, component of the cytochrome c oxidase (complex IV, CIV), a multisubunit enzyme composed of 11 subunits. The complex is composed of a catalytic core of 3 subunits Cox1, Cox2 and Cox3, encoded in the mitochondrial DNA, and 8 supernumerary subunits Cox4, Cox5a/Cox5, Cox6, Cox7, Cox8, Cox7a/Cox9, Cox6b/Cox12 and Cox6a/Cox13, which are encoded in the nuclear genome. The complex exists as a monomer or a dimer and forms respiratory supercomplexes (SCs) in the inner mitochondrial membrane with NADH-ubiquinone oxidoreductase (complex I, CI) and ubiquinol-cytochrome c oxidoreductase (cytochrome b-c1 complex, complex III, CIII), resulting in various different assemblies (supercomplexes I(1)IV(1), I(1)III(3)IV(2), III(2)IV(1) and III(2)IV(2) as well as larger supercomplexes of compositions like I(1)III(2)IV(5-6)).

The protein localises to the mitochondrion inner membrane. The protein operates within energy metabolism; oxidative phosphorylation. Component of the cytochrome c oxidase, the last enzyme in the mitochondrial electron transport chain which drives oxidative phosphorylation. The respiratory chain contains 3 multisubunit complexes succinate dehydrogenase (complex II, CII), ubiquinol-cytochrome c oxidoreductase (cytochrome b-c1 complex, complex III, CIII) and cytochrome c oxidase (complex IV, CIV), that cooperate to transfer electrons derived from NADH and succinate to molecular oxygen, creating an electrochemical gradient over the inner membrane that drives transmembrane transport and the ATP synthase. Cytochrome c oxidase is the component of the respiratory chain that catalyzes the reduction of oxygen to water. Electrons originating from reduced cytochrome c in the intermembrane space (IMS) are transferred via the dinuclear copper A center (CU(A)) of Cox2 and heme A of Cox1 to the active site in Cox1, a binuclear center (BNC) formed by heme A3 and copper B (CU(B)). The BNC reduces molecular oxygen to 2 water molecules using 4 electrons from cytochrome c in the IMS and 4 protons from the mitochondrial matrix. In Neurospora crassa (strain ATCC 24698 / 74-OR23-1A / CBS 708.71 / DSM 1257 / FGSC 987), this protein is Cytochrome c oxidase subunit 4, mitochondrial (cox-4).